Reading from the N-terminus, the 137-residue chain is Large ribosomal subunit protein bL17 (137 aa).

Belongs to the bacterial ribosomal protein bL17 family. Part of the 50S ribosomal subunit. Contacts protein L32.

The sequence is that of Large ribosomal subunit protein bL17 from Bradyrhizobium sp. (strain ORS 278).